We begin with the raw amino-acid sequence, 307 residues long: 2-phospho-L-lactate transferase (307 aa).

7,8-didemethyl-8-hydroxy-5-deazariboflavin is bound by residues Asp-48 and Lys-87.

This sequence belongs to the CofD family. Homodimer. The cofactor is Mg(2+).

The catalysed reaction is (2S)-lactyl-2-diphospho-5'-guanosine + 7,8-didemethyl-8-hydroxy-5-deazariboflavin = oxidized coenzyme F420-0 + GMP + H(+). Its pathway is cofactor biosynthesis; coenzyme F420 biosynthesis. Its function is as follows. Catalyzes the transfer of the 2-phospholactate moiety from (2S)-lactyl-2-diphospho-5'-guanosine to 7,8-didemethyl-8-hydroxy-5-deazariboflavin (FO) with the formation of oxidized coenzyme F420-0 and GMP. The sequence is that of 2-phospho-L-lactate transferase from Methanosarcina acetivorans (strain ATCC 35395 / DSM 2834 / JCM 12185 / C2A).